The following is a 215-amino-acid chain: Phosphoribosylglycinamide formyltransferase (215 aa).

(6R)-10-formyltetrahydrofolate-binding positions include Arg-74, 99 to 102, and Asn-116; that span reads MRIL. His-118 serves as the catalytic Proton donor.

This sequence belongs to the GART family.

The catalysed reaction is N(1)-(5-phospho-beta-D-ribosyl)glycinamide + (6R)-10-formyltetrahydrofolate = N(2)-formyl-N(1)-(5-phospho-beta-D-ribosyl)glycinamide + (6S)-5,6,7,8-tetrahydrofolate + H(+). It functions in the pathway purine metabolism; IMP biosynthesis via de novo pathway; N(2)-formyl-N(1)-(5-phospho-D-ribosyl)glycinamide from N(1)-(5-phospho-D-ribosyl)glycinamide (10-formyl THF route): step 1/1. Functionally, catalyzes the transfer of a formyl group from 10-formyltetrahydrofolate to 5-phospho-ribosyl-glycinamide (GAR), producing 5-phospho-ribosyl-N-formylglycinamide (FGAR) and tetrahydrofolate. This chain is Phosphoribosylglycinamide formyltransferase, found in Mycobacterium tuberculosis (strain CDC 1551 / Oshkosh).